The chain runs to 105 residues: Heat shock protein HspQ (105 aa).

Belongs to the HspQ family.

It is found in the cytoplasm. In terms of biological role, involved in the degradation of certain denaturated proteins, including DnaA, during heat shock stress. The polypeptide is Heat shock protein HspQ (Escherichia fergusonii (strain ATCC 35469 / DSM 13698 / CCUG 18766 / IAM 14443 / JCM 21226 / LMG 7866 / NBRC 102419 / NCTC 12128 / CDC 0568-73)).